Here is a 206-residue protein sequence, read N- to C-terminus: Large ribosomal subunit protein uL4 (206 aa).

Positions 44–87 are disordered; that stretch reads KRQGTHATKTRGMKRGGGAKPWRQKGTGRARAGSTRSPLWRGGG.

It belongs to the universal ribosomal protein uL4 family. As to quaternary structure, part of the 50S ribosomal subunit.

In terms of biological role, one of the primary rRNA binding proteins, this protein initially binds near the 5'-end of the 23S rRNA. It is important during the early stages of 50S assembly. It makes multiple contacts with different domains of the 23S rRNA in the assembled 50S subunit and ribosome. Its function is as follows. Forms part of the polypeptide exit tunnel. The chain is Large ribosomal subunit protein uL4 from Maridesulfovibrio salexigens (strain ATCC 14822 / DSM 2638 / NCIMB 8403 / VKM B-1763) (Desulfovibrio salexigens).